The following is a 352-amino-acid chain: NAD(P)H oxidoreductase RTN4IP1, mitochondrial (352 aa).

An Enoyl reductase (ER) domain is found at 11-348 (ESLDLLEYKT…NSNSNGKIII (338 aa)). 4 residues coordinate NADPH: valine 165, tyrosine 206, alanine 296, and phenylalanine 298.

It belongs to the zinc-containing alcohol dehydrogenase family. Quinone oxidoreductase subfamily.

It is found in the mitochondrion matrix. It catalyses the reaction a quinone + NADH + H(+) = a quinol + NAD(+). The enzyme catalyses a quinone + NADPH + H(+) = a quinol + NADP(+). Its pathway is cofactor biosynthesis; ubiquinone biosynthesis. NAD(P)H oxidoreductase involved in the ubiquinone biosynthetic pathway. Required for the O-methyltransferase activity of coq3. The protein is NAD(P)H oxidoreductase RTN4IP1, mitochondrial (rtn4ip1) of Dictyostelium discoideum (Social amoeba).